The following is a 491-amino-acid chain: Ketol-acid reductoisomerase (NADP(+)) (491 aa).

The KARI N-terminal Rossmann domain occupies 15 to 208; that stretch reads AQLGKCRFMG…GGHRAGVLES (194 aa). NADP(+)-binding positions include 45-48, Arg-68, Arg-76, Ser-78, and 108-110; these read CGAQ and DKQ. Residue His-132 is part of the active site. An NADP(+)-binding site is contributed by Gly-158. KARI C-terminal knotted domains are found at residues 209 to 344 and 345 to 484; these read SFVA…TAPQ and YEGK…MTDM. Mg(2+) contacts are provided by Asp-217, Glu-221, Glu-389, and Glu-393. Ser-414 lines the substrate pocket.

It belongs to the ketol-acid reductoisomerase family. Requires Mg(2+) as cofactor.

The enzyme catalyses (2R)-2,3-dihydroxy-3-methylbutanoate + NADP(+) = (2S)-2-acetolactate + NADPH + H(+). It catalyses the reaction (2R,3R)-2,3-dihydroxy-3-methylpentanoate + NADP(+) = (S)-2-ethyl-2-hydroxy-3-oxobutanoate + NADPH + H(+). Its pathway is amino-acid biosynthesis; L-isoleucine biosynthesis; L-isoleucine from 2-oxobutanoate: step 2/4. It functions in the pathway amino-acid biosynthesis; L-valine biosynthesis; L-valine from pyruvate: step 2/4. Its function is as follows. Involved in the biosynthesis of branched-chain amino acids (BCAA). Catalyzes an alkyl-migration followed by a ketol-acid reduction of (S)-2-acetolactate (S2AL) to yield (R)-2,3-dihydroxy-isovalerate. In the isomerase reaction, S2AL is rearranged via a Mg-dependent methyl migration to produce 3-hydroxy-3-methyl-2-ketobutyrate (HMKB). In the reductase reaction, this 2-ketoacid undergoes a metal-dependent reduction by NADPH to yield (R)-2,3-dihydroxy-isovalerate. This is Ketol-acid reductoisomerase (NADP(+)) from Escherichia coli O7:K1 (strain IAI39 / ExPEC).